A 670-amino-acid polypeptide reads, in one-letter code: mRNA cleavage and polyadenylation specificity factor complex subunit pta1 (670 aa).

This sequence to yeast PTA1. Component of the cleavage and polyadenylation factor (CPF) complex, which is composed of cft1, cft2, ysh1, pta1, swd2, pfs2, dis2, yth1, ssu72, and fip1.

The protein resides in the nucleus. Functionally, component of the cleavage and polyadenylation factor (CPF) complex, which plays a key role in polyadenylation-dependent pre-mRNA 3'-end formation and cooperates with cleavage factors including the CFIA complex and NAB4/CFIB. The sequence is that of mRNA cleavage and polyadenylation specificity factor complex subunit pta1 (pta1) from Schizosaccharomyces pombe (strain 972 / ATCC 24843) (Fission yeast).